We begin with the raw amino-acid sequence, 733 residues long: Polyribonucleotide nucleotidyltransferase (733 aa).

Mg(2+)-binding residues include Asp489 and Asp495. In terms of domain architecture, KH spans 556-615 (PKIDTIKIDVDKIKIVIGKGGETIDKIIAETGVKIDIDEEGNVSIYSSDQDAINRAKEII). The S1 motif domain occupies 625–693 (DEVYHAKVVR…AKGRVDASMK (69 aa)). The segment at 691–733 (SMKVLLPRPPKSDKPKHHHDKGHHPHKEYKGHKDHQESPKTEE) is disordered. A compositionally biased stretch (basic residues) spans 704–723 (KPKHHHDKGHHPHKEYKGHK). Positions 724 to 733 (DHQESPKTEE) are enriched in basic and acidic residues.

Belongs to the polyribonucleotide nucleotidyltransferase family. Requires Mg(2+) as cofactor.

The protein localises to the cytoplasm. The catalysed reaction is RNA(n+1) + phosphate = RNA(n) + a ribonucleoside 5'-diphosphate. Functionally, involved in mRNA degradation. Catalyzes the phosphorolysis of single-stranded polyribonucleotides processively in the 3'- to 5'-direction. The polypeptide is Polyribonucleotide nucleotidyltransferase (Streptococcus sanguinis (strain SK36)).